Here is a 683-residue protein sequence, read N- to C-terminus: Zinc finger protein 510 (683 aa).

Residues 46-117 (VSFKDVTIEF…EEEFSNQSHP (72 aa)) form the KRAB domain. The C2H2-type 1; degenerate zinc finger occupies 254-276 (FECNKIGKAFNDKANCVKHNSSH). 9 consecutive C2H2-type zinc fingers follow at residues 404–426 (YKCN…QRTH), 432–454 (FECS…QRIH), 460–482 (YKCN…QRIH), 488–510 (YECS…HRIH), 516–538 (FQCN…QRTH), 544–566 (YQCN…QKTH), 572–594 (FKCN…QRIH), 600–622 (FKCN…QRIH), and 628–650 (FQCN…QRTH).

Belongs to the krueppel C2H2-type zinc-finger protein family.

It is found in the nucleus. Its function is as follows. May be involved in transcriptional regulation. The protein is Zinc finger protein 510 (ZNF510) of Homo sapiens (Human).